The primary structure comprises 279 residues: Malonyl-[acyl-carrier protein] O-methyltransferase (279 aa).

The protein belongs to the methyltransferase superfamily.

The enzyme catalyses malonyl-[ACP] + S-adenosyl-L-methionine = malonyl-[ACP] methyl ester + S-adenosyl-L-homocysteine. The protein operates within cofactor biosynthesis; biotin biosynthesis. Converts the free carboxyl group of a malonyl-thioester to its methyl ester by transfer of a methyl group from S-adenosyl-L-methionine (SAM). It allows to synthesize pimeloyl-ACP via the fatty acid synthetic pathway. The protein is Malonyl-[acyl-carrier protein] O-methyltransferase of Hahella chejuensis (strain KCTC 2396).